A 122-amino-acid chain; its full sequence is UPF0382 membrane protein SERP0230 (122 aa).

4 helical membrane passes run 3 to 23 (VFII…AFGA), 46 to 66 (MYHG…SINV), 69 to 89 (AGWL…FLAL), and 98 to 118 (ITPI…IATL).

The protein belongs to the UPF0382 family.

The protein localises to the cell membrane. The polypeptide is UPF0382 membrane protein SERP0230 (Staphylococcus epidermidis (strain ATCC 35984 / DSM 28319 / BCRC 17069 / CCUG 31568 / BM 3577 / RP62A)).